The following is a 363-amino-acid chain: MGEVYEKNNIDFDSIAKMLLIKYKDFILSKFKKAAPVENIRFQNLVHTNQFAQGVLGQSQHLCTVYDNPSWHSIVLETLDLDLIYKNVDKEFAKDGHAEGENIYTDYLVKELLRYFKQDFFKWCNKPDCNHCGQNTSENMTPLGSQGPNGEESKFNCGTVEIYKCNRCGNITRFPRYNDPIKLLETRKGRCGEWCNLFTLILKSFGLDVRYVWNREDHVWCEYFSNFLNRWVHVDSCEQSFDQPYIYSINWNKKMSYCIAFGKDGVVDVSKRYILQNELPRDQIKEEDLKFLCQFITKRLRYSLNDDEIYQLACRDEQEQIELIRGKTQETKSESVSAASKSSNRGRESGSADWKAQRGEDGK.

The Zn(2+) site is built by C129, C132, C165, and C168. The active-site Nucleophile is C191. Catalysis depends on residues H218 and D235. Position 238 (E238) interacts with substrate. The segment at 325–363 is disordered; it reads RGKTQETKSESVSAASKSSNRGRESGSADWKAQRGEDGK. The span at 334 to 343 shows a compositional bias: low complexity; sequence ESVSAASKSS. The span at 345–363 shows a compositional bias: basic and acidic residues; sequence RGRESGSADWKAQRGEDGK.

This sequence belongs to the transglutaminase-like superfamily. PNGase family. In terms of assembly, interacts with RAD23 subunit of 26S proteasome. Zn(2+) serves as cofactor.

The protein resides in the cytoplasm. Its subcellular location is the nucleus. It catalyses the reaction Hydrolysis of an N(4)-(acetyl-beta-D-glucosaminyl)asparagine residue in which the glucosamine residue may be further glycosylated, to yield a (substituted) N-acetyl-beta-D-glucosaminylamine and a peptide containing an aspartate residue.. Inhibited by Z-VAD-fmk, a well-known caspase inhibitor. Also inhibited by Man9GlcNAc2-iodoacetoamide. Both molecules inhibit enzyme activity through covalent binding of the carbohydrate to the single Cys-191 residue. Functionally, specifically deglycosylates the denatured form of N-linked glycoproteins in the cytoplasm and assists their proteasome-mediated degradation. Cleaves the beta-aspartyl-glucosamine (GlcNAc) of the glycan and the amide side chain of Asn, converting Asn to Asp. Prefers proteins containing high-mannose over those bearing complex type oligosaccharides. Can recognize misfolded proteins in the endoplasmic reticulum that are exported to the cytosol to be destroyed and deglycosylate them, while it has no activity toward native proteins. Deglycosylation is a prerequisite for subsequent proteasome-mediated degradation of some, but not all, misfolded glycoproteins. Involved in the formation of free oligosaccharide in cytosol. The sequence is that of Peptide-N(4)-(N-acetyl-beta-glucosaminyl)asparagine amidase (PNG1) from Saccharomyces cerevisiae (strain ATCC 204508 / S288c) (Baker's yeast).